The chain runs to 221 residues: 7-cyano-7-deazaguanine synthase (221 aa).

Position 8 to 18 (8 to 18 (LSGGMDSAAVI)) interacts with ATP. Zn(2+)-binding residues include Cys186, Cys196, Cys199, and Cys202.

It belongs to the QueC family. Zn(2+) is required as a cofactor.

The enzyme catalyses 7-carboxy-7-deazaguanine + NH4(+) + ATP = 7-cyano-7-deazaguanine + ADP + phosphate + H2O + H(+). It participates in purine metabolism; 7-cyano-7-deazaguanine biosynthesis. In terms of biological role, catalyzes the ATP-dependent conversion of 7-carboxy-7-deazaguanine (CDG) to 7-cyano-7-deazaguanine (preQ(0)). The protein is 7-cyano-7-deazaguanine synthase of Stenotrophomonas maltophilia (strain K279a).